The chain runs to 76 residues: UPF0291 protein BC_1827 (76 aa).

Belongs to the UPF0291 family.

The protein resides in the cytoplasm. This Bacillus cereus (strain ATCC 14579 / DSM 31 / CCUG 7414 / JCM 2152 / NBRC 15305 / NCIMB 9373 / NCTC 2599 / NRRL B-3711) protein is UPF0291 protein BC_1827.